Consider the following 57-residue polypeptide: Preprotein translocase subunit SecG (57 aa).

At 1-31 the chain is on the cytoplasmic side; it reads MAKKKGEGPGLMSSAGLMRYFESEETSIKLD. The helical transmembrane segment at 32 to 53 threads the bilayer; it reads PKMVIGAGIASGVAIMALNITF. Topologically, residues 54–57 are extracellular; that stretch reads GLWP.

The protein belongs to the SEC61-beta family. Component of the protein translocase complex. Heterotrimer consisting of alpha (SecY), beta (SecG) and gamma (SecE) subunits. Can form oligomers of the heterotrimer.

The protein localises to the cell membrane. In terms of biological role, involved in protein export. The function of the beta subunit is unknown, but it may be involved in stabilization of the trimeric complex. In Methanothrix thermoacetophila (strain DSM 6194 / JCM 14653 / NBRC 101360 / PT) (Methanosaeta thermophila), this protein is Preprotein translocase subunit SecG.